We begin with the raw amino-acid sequence, 734 residues long: Photosystem I P700 chlorophyll a apoprotein A2 (734 aa).

Helical transmembrane passes span 46–69 (IFASHFGQLAIIFLWTSGNLFHVA), 135–158 (LYAGALFLLFLSVIFLIAGRLHLQ), 175–199 (LNHHLSGLFGVSSLAWTGHLVHVAI), 273–291 (MAHHHLAIALVFSIAGHMY), 330–353 (LHFQLGLALASLGVITSLVAQHMY), 369–395 (AALYTHHQYIAGFIMTGAFAHGAIFLI), 417–439 (AIISHLSWVSLLLGFHTLGLYVH), and 517–535 (FLVHHAIALGLHTTTLILV). [4Fe-4S] cluster-binding residues include cysteine 559 and cysteine 568. The next 2 membrane-spanning stretches (helical) occupy residues 575 to 596 (AFYLAVFWMLNTIGWVTFYWHW) and 643 to 665 (LSVWAWMFLFGHLVWATGFMFLI). Chlorophyll a is bound by residues histidine 654, methionine 662, and tyrosine 670. Residue tryptophan 671 coordinates phylloquinone. The helical transmembrane segment at 707–727 (LVGLAHFSVGYIFTYAAFLIA) threads the bilayer.

Belongs to the PsaA/PsaB family. In terms of assembly, the PsaA/B heterodimer binds the P700 chlorophyll special pair and subsequent electron acceptors. PSI consists of a core antenna complex that captures photons, and an electron transfer chain that converts photonic excitation into a charge separation. The eukaryotic PSI reaction center is composed of at least 11 subunits. Requires P700 is a chlorophyll a/chlorophyll a' dimer, A0 is one or more chlorophyll a, A1 is one or both phylloquinones and FX is a shared 4Fe-4S iron-sulfur center. as cofactor.

The protein localises to the plastid. The protein resides in the chloroplast thylakoid membrane. It catalyses the reaction reduced [plastocyanin] + hnu + oxidized [2Fe-2S]-[ferredoxin] = oxidized [plastocyanin] + reduced [2Fe-2S]-[ferredoxin]. In terms of biological role, psaA and PsaB bind P700, the primary electron donor of photosystem I (PSI), as well as the electron acceptors A0, A1 and FX. PSI is a plastocyanin-ferredoxin oxidoreductase, converting photonic excitation into a charge separation, which transfers an electron from the donor P700 chlorophyll pair to the spectroscopically characterized acceptors A0, A1, FX, FA and FB in turn. Oxidized P700 is reduced on the lumenal side of the thylakoid membrane by plastocyanin. The protein is Photosystem I P700 chlorophyll a apoprotein A2 of Pinus thunbergii (Japanese black pine).